The following is a 117-amino-acid chain: Ig heavy chain V region MOO (117 aa).

Positions 1–116 constitute an Ig-like domain; sequence EVKLVESGGD…FGQGTIVTVS (116 aa).

The sequence is that of Ig heavy chain V region MOO from Canis lupus familiaris (Dog).